A 238-amino-acid chain; its full sequence is Small ribosomal subunit protein eS4 (238 aa).

The S4 RNA-binding domain occupies 38 to 109; the sequence is IPLALVIRDV…DERSYYALVP (72 aa).

It belongs to the eukaryotic ribosomal protein eS4 family.

The chain is Small ribosomal subunit protein eS4 from Pyrobaculum neutrophilum (strain DSM 2338 / JCM 9278 / NBRC 100436 / V24Sta) (Thermoproteus neutrophilus).